The sequence spans 110 residues: Large ribosomal subunit protein uL22 (110 aa).

It belongs to the universal ribosomal protein uL22 family. As to quaternary structure, part of the 50S ribosomal subunit.

Its function is as follows. This protein binds specifically to 23S rRNA; its binding is stimulated by other ribosomal proteins, e.g. L4, L17, and L20. It is important during the early stages of 50S assembly. It makes multiple contacts with different domains of the 23S rRNA in the assembled 50S subunit and ribosome. In terms of biological role, the globular domain of the protein is located near the polypeptide exit tunnel on the outside of the subunit, while an extended beta-hairpin is found that lines the wall of the exit tunnel in the center of the 70S ribosome. The chain is Large ribosomal subunit protein uL22 from Shewanella halifaxensis (strain HAW-EB4).